The following is a 335-amino-acid chain: Phosphatidate cytidylyltransferase, mitochondrial (335 aa).

It belongs to the TAM41 family. Mg(2+) serves as cofactor.

Its subcellular location is the mitochondrion inner membrane. It catalyses the reaction a 1,2-diacyl-sn-glycero-3-phosphate + CTP + H(+) = a CDP-1,2-diacyl-sn-glycerol + diphosphate. It participates in phospholipid metabolism; CDP-diacylglycerol biosynthesis; CDP-diacylglycerol from sn-glycerol 3-phosphate: step 3/3. Functionally, catalyzes the conversion of phosphatidic acid (PA) to CDP-diacylglycerol (CDP-DAG), an essential intermediate in the synthesis of phosphatidylglycerol, cardiolipin and phosphatidylinositol. This chain is Phosphatidate cytidylyltransferase, mitochondrial (TAMM41), found in Bos taurus (Bovine).